A 327-amino-acid chain; its full sequence is Ribosomal RNA large subunit methyltransferase F (327 aa).

This sequence belongs to the methyltransferase superfamily. METTL16/RlmF family.

It localises to the cytoplasm. The enzyme catalyses adenosine(1618) in 23S rRNA + S-adenosyl-L-methionine = N(6)-methyladenosine(1618) in 23S rRNA + S-adenosyl-L-homocysteine + H(+). Specifically methylates the adenine in position 1618 of 23S rRNA. This Marinomonas sp. (strain MWYL1) protein is Ribosomal RNA large subunit methyltransferase F.